The sequence spans 182 residues: DAEQHGEVALKDANAKLQDLKAALQQAKEDLARLLKEYQELMNVKLALDIEIATYRTLLEGEECRMSGECQSSVSIEMVHNTTSSSSGGSGALGGGAGGRGGLGSGGLGSGSLGSGRLGSGGRGSRASRGNLALDSSSGGGSAVRGSVSNSGGSCAVSGVGGRGSVRVTQSSSQSQRSHHKL.

The IF rod domain occupies 1-66; that stretch reads DAEQHGEVAL…TLLEGEECRM (66 aa). The segment at 1 to 66 is coil 2B; that stretch reads DAEQHGEVAL…TLLEGEECRM (66 aa). Positions 67-86 are H2 subdomain; it reads SGECQSSVSIEMVHNTTSSS. The segment at 67–182 is tail; the sequence is SGECQSSVSI…SQSQRSHHKL (116 aa). The tract at residues 87-162 is V2 subdomain; sequence SGGSGALGGG…GSCAVSGVGG (76 aa). Residues 104-124 show a composition bias toward gly residues; that stretch reads GSGGLGSGSLGSGRLGSGGRG. Residues 104 to 182 are disordered; sequence GSGGLGSGSL…SQSQRSHHKL (79 aa). Low complexity-rich tracts occupy residues 144 to 158 and 165 to 176; these read VRGS…CAVS and SVRVTQSSSQSQ. Residues 163 to 182 form an E2 subdomain region; that stretch reads RGSVRVTQSSSQSQRSHHKL.

It belongs to the intermediate filament family. Heterotetramer of two type I and two type II keratins.

The chain is Keratin, type II cytoskeletal 68 kDa, component IA from Bos taurus (Bovine).